The following is an 835-amino-acid chain: Replication origin-binding protein (835 aa).

In terms of domain architecture, Helicase ATP-binding spans 54–215; the sequence is PGMSQTRPVT…SGLRGDENIH (162 aa). 67–74 is a binding site for ATP; sequence APMGSGKT.

It belongs to the herpesviridae OriBP family. As to quaternary structure, homodimer. Interacts with the major DNA-binding protein. Interacts with the helicase/primase component 52 and the polymerase accessory protein.

It is found in the host nucleus. Functions as a docking protein to recruit essential components of the viral replication machinery to viral DNA origins. In the presence of the major DNA-binding protein, opens dsDNA leading to a conformational change in the origin that facilitates DNA unwinding and subsequent replication. The protein is Replication origin-binding protein of Varicella-zoster virus (strain Oka vaccine) (HHV-3).